The primary structure comprises 445 residues: tRNA modification GTPase MnmE (445 aa).

Residues arginine 20, glutamate 79, and lysine 119 each contribute to the (6S)-5-formyl-5,6,7,8-tetrahydrofolate site. Positions 215 to 371 constitute a TrmE-type G domain; sequence GLKLAIIGPP…ILKNIENIAE (157 aa). Asparagine 225 serves as a coordination point for K(+). GTP-binding positions include 225-230, 244-250, and 269-272; these read NTGKSS, SNIAGTT, and DTAG. Residue serine 229 participates in Mg(2+) binding. K(+)-binding residues include serine 244, isoleucine 246, and threonine 249. Threonine 250 contributes to the Mg(2+) binding site. (6S)-5-formyl-5,6,7,8-tetrahydrofolate is bound at residue lysine 445.

It belongs to the TRAFAC class TrmE-Era-EngA-EngB-Septin-like GTPase superfamily. TrmE GTPase family. In terms of assembly, homodimer. Heterotetramer of two MnmE and two MnmG subunits. Requires K(+) as cofactor.

It is found in the cytoplasm. Exhibits a very high intrinsic GTPase hydrolysis rate. Involved in the addition of a carboxymethylaminomethyl (cmnm) group at the wobble position (U34) of certain tRNAs, forming tRNA-cmnm(5)s(2)U34. This chain is tRNA modification GTPase MnmE, found in Rickettsia prowazekii (strain Madrid E).